Reading from the N-terminus, the 339-residue chain is Ferredoxin--NADP reductase (339 aa).

Residues aspartate 36, glutamine 44, tyrosine 49, valine 89, phenylalanine 123, aspartate 290, and threonine 331 each coordinate FAD.

The protein belongs to the ferredoxin--NADP reductase type 2 family. In terms of assembly, homodimer. It depends on FAD as a cofactor.

It catalyses the reaction 2 reduced [2Fe-2S]-[ferredoxin] + NADP(+) + H(+) = 2 oxidized [2Fe-2S]-[ferredoxin] + NADPH. The protein is Ferredoxin--NADP reductase of Acidiphilium cryptum (strain JF-5).